Reading from the N-terminus, the 454-residue chain is tRNA modification GTPase MnmE (454 aa).

3 residues coordinate (6S)-5-formyl-5,6,7,8-tetrahydrofolate: Arg23, Glu80, and Lys120. Residues 216–377 (GMKVVIAGRP…LRDHLKQSMG (162 aa)) form the TrmE-type G domain. Asn226 is a K(+) binding site. GTP-binding positions include 226–231 (NAGKSS), 245–251 (TDIAGTT), 270–273 (DTAG), 335–338 (NKAD), and 358–360 (SAR). Ser230 is a binding site for Mg(2+). Positions 245, 247, and 250 each coordinate K(+). Residue Thr251 participates in Mg(2+) binding. Lys454 lines the (6S)-5-formyl-5,6,7,8-tetrahydrofolate pocket.

The protein belongs to the TRAFAC class TrmE-Era-EngA-EngB-Septin-like GTPase superfamily. TrmE GTPase family. As to quaternary structure, homodimer. Heterotetramer of two MnmE and two MnmG subunits. It depends on K(+) as a cofactor.

It localises to the cytoplasm. Exhibits a very high intrinsic GTPase hydrolysis rate. Involved in the addition of a carboxymethylaminomethyl (cmnm) group at the wobble position (U34) of certain tRNAs, forming tRNA-cmnm(5)s(2)U34. This chain is tRNA modification GTPase MnmE, found in Yersinia pseudotuberculosis serotype O:3 (strain YPIII).